Consider the following 238-residue polypeptide: 1-(5-phosphoribosyl)-5-[(5-phosphoribosylamino)methylideneamino] imidazole-4-carboxamide isomerase (238 aa).

Catalysis depends on D8, which acts as the Proton acceptor. D130 functions as the Proton donor in the catalytic mechanism.

Belongs to the HisA/HisF family.

Its subcellular location is the cytoplasm. The catalysed reaction is 1-(5-phospho-beta-D-ribosyl)-5-[(5-phospho-beta-D-ribosylamino)methylideneamino]imidazole-4-carboxamide = 5-[(5-phospho-1-deoxy-D-ribulos-1-ylimino)methylamino]-1-(5-phospho-beta-D-ribosyl)imidazole-4-carboxamide. It participates in amino-acid biosynthesis; L-histidine biosynthesis; L-histidine from 5-phospho-alpha-D-ribose 1-diphosphate: step 4/9. The chain is 1-(5-phosphoribosyl)-5-[(5-phosphoribosylamino)methylideneamino] imidazole-4-carboxamide isomerase from Methanococcus vannielii (strain ATCC 35089 / DSM 1224 / JCM 13029 / OCM 148 / SB).